A 252-amino-acid polypeptide reads, in one-letter code: 5-oxoprolinase subunit A 1 (252 aa).

The protein belongs to the LamB/PxpA family. As to quaternary structure, forms a complex composed of PxpA, PxpB and PxpC.

The catalysed reaction is 5-oxo-L-proline + ATP + 2 H2O = L-glutamate + ADP + phosphate + H(+). In terms of biological role, catalyzes the cleavage of 5-oxoproline to form L-glutamate coupled to the hydrolysis of ATP to ADP and inorganic phosphate. The sequence is that of 5-oxoprolinase subunit A 1 from Bordetella bronchiseptica (strain ATCC BAA-588 / NCTC 13252 / RB50) (Alcaligenes bronchisepticus).